Consider the following 278-residue polypeptide: Shikimate dehydrogenase (NADP(+)) (278 aa).

Residues 19 to 21 (SRS) and Thr66 contribute to the shikimate site. The active-site Proton acceptor is Lys70. Asn91 and Asp106 together coordinate shikimate. NADP(+) contacts are provided by residues 129-133 (GAGGA) and Phe221. Position 223 (Tyr223) interacts with shikimate. Position 242 (Gly242) interacts with NADP(+).

This sequence belongs to the shikimate dehydrogenase family. Homodimer.

It carries out the reaction shikimate + NADP(+) = 3-dehydroshikimate + NADPH + H(+). It participates in metabolic intermediate biosynthesis; chorismate biosynthesis; chorismate from D-erythrose 4-phosphate and phosphoenolpyruvate: step 4/7. Functionally, involved in the biosynthesis of the chorismate, which leads to the biosynthesis of aromatic amino acids. Catalyzes the reversible NADPH linked reduction of 3-dehydroshikimate (DHSA) to yield shikimate (SA). The protein is Shikimate dehydrogenase (NADP(+)) of Anaeromyxobacter dehalogenans (strain 2CP-C).